A 566-amino-acid polypeptide reads, in one-letter code: Transcription factor tasR (566 aa).

Residues 1 to 30 (MISASRMEESASSSSLSDAAAPPPGAALQS) are compositionally biased toward low complexity. A disordered region spans residues 1–31 (MISASRMEESASSSSLSDAAAPPPGAALQSI). Positions 35–68 (CDRCRFHKLKCNVPAAGHGGPVPCERCTRAKVPC) form a DNA-binding region, zn(2)-C6 fungal-type. Disordered regions lie at residues 72 to 174 (RRRR…PGQH), 346 to 382 (EFIV…GGDD), 422 to 453 (SESD…TGTA), and 500 to 551 (RGVG…GLGG). 2 stretches are compositionally biased toward low complexity: residues 89-108 (PTRR…TSAA) and 359-378 (SESS…NNEA). Gly residues predominate over residues 501–532 (GVGGGGGGGGGGGGGGGGGVGGGGGGGGGPGG).

It is found in the nucleus. Transcription factor that regulates the expression of the gene cluster that mediates the biosynthesis of the tetramic acids Sch210971 and Sch210972, potential anti-HIV fungal natural product that contain a decalin core. The polypeptide is Transcription factor tasR (Hapsidospora irregularis).